Reading from the N-terminus, the 150-residue chain is MAKKSVRHIKIREIISNEKIETQDELVKRLNEYELNVTQATVSRDIKELQLIKVPTPAGQYVYSLPNDRKYHPLEKLGRYLIDSFVNIDGTGNLLVLKTLPGNAQSIGAILDQIDWEDVLGTICGDDTCLIICRDDAASEKIKTRIFNLL.

The protein belongs to the ArgR family.

The protein resides in the cytoplasm. It participates in amino-acid biosynthesis; L-arginine biosynthesis [regulation]. Regulates arginine biosynthesis genes. The polypeptide is Arginine repressor (Staphylococcus saprophyticus subsp. saprophyticus (strain ATCC 15305 / DSM 20229 / NCIMB 8711 / NCTC 7292 / S-41)).